We begin with the raw amino-acid sequence, 184 residues long: ATP synthase subunit b (184 aa).

Residues 25 to 45 (IFPSWPIMLATLVSFTILLVV) traverse the membrane as a helical segment.

This sequence belongs to the ATPase B chain family. As to quaternary structure, F-type ATPases have 2 components, F(1) - the catalytic core - and F(0) - the membrane proton channel. F(1) has five subunits: alpha(3), beta(3), gamma(1), delta(1), epsilon(1). F(0) has three main subunits: a(1), b(2) and c(10-14). The alpha and beta chains form an alternating ring which encloses part of the gamma chain. F(1) is attached to F(0) by a central stalk formed by the gamma and epsilon chains, while a peripheral stalk is formed by the delta and b chains.

The protein localises to the cell membrane. Its function is as follows. F(1)F(0) ATP synthase produces ATP from ADP in the presence of a proton or sodium gradient. F-type ATPases consist of two structural domains, F(1) containing the extramembraneous catalytic core and F(0) containing the membrane proton channel, linked together by a central stalk and a peripheral stalk. During catalysis, ATP synthesis in the catalytic domain of F(1) is coupled via a rotary mechanism of the central stalk subunits to proton translocation. Component of the F(0) channel, it forms part of the peripheral stalk, linking F(1) to F(0). This chain is ATP synthase subunit b, found in Mycoplasma mobile (strain ATCC 43663 / 163K / NCTC 11711) (Mesomycoplasma mobile).